The primary structure comprises 149 residues: Large ribosomal subunit protein bL9 (149 aa).

This sequence belongs to the bacterial ribosomal protein bL9 family.

In terms of biological role, binds to the 23S rRNA. The protein is Large ribosomal subunit protein bL9 of Klebsiella pneumoniae subsp. pneumoniae (strain ATCC 700721 / MGH 78578).